A 90-amino-acid polypeptide reads, in one-letter code: PqqA binding protein 2 (90 aa).

It belongs to the PqqD family. As to quaternary structure, monomer. Interacts with PqqE.

It functions in the pathway cofactor biosynthesis; pyrroloquinoline quinone biosynthesis. Functions as a PqqA binding protein and presents PqqA to PqqE, in the pyrroloquinoline quinone (PQQ) biosynthetic pathway. The polypeptide is PqqA binding protein 2 (pqqD2) (Pseudomonas putida (strain ATCC 47054 / DSM 6125 / CFBP 8728 / NCIMB 11950 / KT2440)).